A 333-amino-acid polypeptide reads, in one-letter code: uncharacterized protein (333 aa).

Residues 1–23 (MSRSFMIILTIMLIALSLGEVLA) form the signal peptide. The chain crosses the membrane as a helical span at residues 232–252 (SFFLGVLVTLMILSPVIVYLW).

Its subcellular location is the membrane. This is an uncharacterized protein from Pyrococcus abyssi (strain GE5 / Orsay).